The following is a 430-amino-acid chain: Adenylosuccinate synthetase (430 aa).

Residues 13 to 19 and 41 to 43 contribute to the GTP site; these read GDEGKGK and GHT. The Proton acceptor role is filled by Asp-14. Residues Asp-14 and Gly-41 each contribute to the Mg(2+) site. Residues 14–17, 39–42, Thr-130, Arg-144, Gln-225, Thr-240, and Arg-304 contribute to the IMP site; these read DEGK and NAGH. Catalysis depends on His-42, which acts as the Proton donor. Position 300-306 (300-306) interacts with substrate; sequence ASTGRPR. GTP is bound by residues Arg-306, 332-334, and 414-416; these read KLD and STG.

It belongs to the adenylosuccinate synthetase family. In terms of assembly, homodimer. It depends on Mg(2+) as a cofactor.

The protein localises to the cytoplasm. The catalysed reaction is IMP + L-aspartate + GTP = N(6)-(1,2-dicarboxyethyl)-AMP + GDP + phosphate + 2 H(+). It functions in the pathway purine metabolism; AMP biosynthesis via de novo pathway; AMP from IMP: step 1/2. Plays an important role in the de novo pathway of purine nucleotide biosynthesis. Catalyzes the first committed step in the biosynthesis of AMP from IMP. The polypeptide is Adenylosuccinate synthetase (Xylella fastidiosa (strain M23)).